Consider the following 150-residue polypeptide: Galactose-binding lectin (150 aa).

Residues histidine 16 and glycine 19 each coordinate D-galactose. Asparagine 26 is a glycosylation site (N-linked (GlcNAc...) asparagine). D-galactose-binding positions include asparagine 27, 35 to 37, histidine 64, and glycine 67; that span reads DIH. The N-linked (GlcNAc...) asparagine glycan is linked to asparagine 74. D-galactose contacts are provided by residues glutamate 75, 83–85, histidine 108, and glycine 111; that span reads DRH. The N-linked (GlcNAc...) asparagine glycan is linked to asparagine 118. D-galactose contacts are provided by residues asparagine 119 and 127-129; that span reads DKH.

As to quaternary structure, monomer in solution. Homodimer in solution. Exists as a monomer in solution when a low concentration (0.001 mg/ml) of it is present. Homodimers start to appear at a concentration of 0.01 mg/ml and tetramers at a concentration of 0.1 mg/ml. In terms of tissue distribution, highly expressed in mantle and to a lesser extent in muscle, hepatopancreas, gill and hemocytes.

Bacterial binding activity is inhibited by D-galactose. Hemagglutinating activity is independent of divalent cations Ca2(+) or Mg2(+). It is strongly inhibited by N-acetyl-D-galactosamine (GalNAc), D-galactose and D-talose, and to a lesser extent by melibiose and raffinose. Also inhibited by glycoprotein asialo-bovine submaxillary mucin (BSM). Not inhibited by D-glucose, D-fucose, D-galactitol, N-acetyl-D-glucosamine or lactose. Fungal binding activity is inhibited by D-galactose. Cytotoxic activity against Raji cell line is completely inhibited by galactose, melibiose and raffinose, but not by glucose or lactose. Galactose inhibits binding to laminin and BSM, but not to collagen, gelatin or fibronectin. Galactose-binding lectin. Binds both alpha and beta anomer of galactose (Gal), but has a stronger interaction with the glycans having alpha Gal at the non-reducing end and binds beta Gal weakly only in highly branched glycans. Has high affinity to Galalpha1-4Galbeta1-4GlcNAc. Binds N-acetyl-2-deoxy-2-amino-galactose (2-deoxy-GalNAc). Binds N-acetylgalactosamine (GalNAc). Binds porcine stomach mucin (PSM) with high affinity. Binds galactosamine. Binds laminin, bovine submaxillary mucin (BSM), fibronectin, type I collagen and gelatin with a decreasing affinity, respectively. Has hemagglutinating activity towards human type A erythrocytes. Also hemagglutinates human type 0, B and AB erythrocytes as well as rabbit and mouse erythrocytes. Agglutinates both Gram-positive and Gram-negative bacteria including B.subtilis ATCC 6633, S.aureus ATCC 21027 and E.coli 3254, respectively. No agglutination activity towards Gram-positive S.amurskyense CMM 3673. Has bacteriostatic activity on S.amurskyense CMM 3673, B.subtilis ATCC 6633, S.aureus ATCC 21027 and E.coli 3254. However, has no agglutination nor bacteriostatic activity on Gram-negative C.scophthalmum CIP 104199 or A.troitsensis KMM 3674. Inhibits growth of fungi from the genera Aspergillus, Penicillium, Trichoderma and st. Mycelia. Inhibits germination of spores and hyphal growth of them. Has dose-dependent cytotoxic effect on the human globotriaosylceramide (Gb3)-expressing Burkitt's lymphoma (Raji) cell line. Binds to Gb3 in these cells leading to activation of caspase-9/3 and PARP. Has dose-dependent cytotoxic effect on the Gb3-expressing human MCF-7 breast cancer cell line. No cytotoxic effect on myelogenous leukemia K562 cell line, which does not express Gb3. Activates immune responses in mice and increases cytokine production of TNF-alpha, IL-6 and MCP-1 in the serum and the peritoneal lavage of mice. Induces TNF-alpha and IL-6 secretion in mouse RAW264.7 macrophages, mouse bone marrow-derived macrophages, human THP-1 macrophages, human peripheral blood mononuclear cells (PBMCs) and human blood monocyte-derived macrophages. TNF-alpha production in macrophages could not be inhibited by GalNAc, GalN or Gal, indicating that induced cytokine production is separate from its sugar binding activity. Increases intracellular reactive oxygen species levels, expression and phosphorylation of protein kinases PKC alpha/delta, expression of COX-2 and NF-kappaB, and activates the MAPK pathway by increasing the phosphorylation of ERK1/2, JNK1/2 and p38 in mouse RAW264.7 macrophages. Induces endotoxin tolerance in lipopolysaccharide(LPS)-activated macrophages by down-regulating IRAK2 expression, reducing JNK1/2 phosphorylation and NF-kappaB activation. Can slightly increase the bactericidal activity of RAW264.7 macrophages. Has DNA-binding activity. Recognizes pathogen-associated molecular patterns (PAMPs) and binds to LPS from E.coli, but has only little binding to beta-1,3-glucan from E.gracilis and peptidoglycan from S.aureus. Activates secretion of TNF-alpha and IFN-gamma by the human peripheral blood cells (HPBCs). May be involved in innate immunity acting as an antibacterial and antifungal agent involved in the recognition and clearance of pathogens. In Crenomytilus grayanus (Gray mussel), this protein is Galactose-binding lectin.